A 181-amino-acid polypeptide reads, in one-letter code: MQRLEESLHEAPIIDKDGYSYLVHPISNGVPMLDPQLLREVVVGITRAADLDVDKIVAPEAMGIHIATALSLQTDVPLVVIRKREYGLDGEVALHQTTGYSESEMFINDIEDGDRVLVVDDLLSTGGTLAAICGALDDIGAEVSDIVVAIRKVGETALDDTDYEATSLVDISVDEDGVEIH.

It belongs to the purine/pyrimidine phosphoribosyltransferase family. Archaeal HPRT subfamily.

May catalyze a purine salvage reaction, the substrate is unknown. This Haloferax volcanii (strain ATCC 29605 / DSM 3757 / JCM 8879 / NBRC 14742 / NCIMB 2012 / VKM B-1768 / DS2) (Halobacterium volcanii) protein is HGPRTase-like protein 2.